The chain runs to 394 residues: Putative bacilysin exporter BacE (394 aa).

11 helical membrane passes run 11-31 (LLYGQALSFMGDYCVLPALLI), 43-63 (SGVIVVRSIPMVFQPFLGVLV), 69-89 (IKIMLWTDIIRGIIFLGLTFL), 92-112 (GEYPLIFLALLFITYGSGVFF), 142-162 (IIVGAAAGGLFLLGGSVELAV), 166-186 (GVTYLVSAFFISRIKLQFVPI), 215-235 (MFTMITMALLWGVVYSYFPIV), 244-264 (IGNFILTFCIGFGGFIGAALV), 288-308 (LFLFTPIFAVSVIAAILFFIA), 332-352 (IFSVAEASIGLCISIGSMFIN), and 353-373 (ILSAPVIMGLIVVIVCGLFLH).

This sequence belongs to the major facilitator superfamily. Drug:H(+) antiporter-3 (DHA3) (TC 2.A.1.21) family.

The protein localises to the cell membrane. In terms of biological role, part of the bacilysin biosynthesis operon. May be involved in self-resistance to bacilysin by permitting efflux of this antibiotic. The protein is Putative bacilysin exporter BacE (bacE) of Bacillus subtilis (strain 168).